We begin with the raw amino-acid sequence, 854 residues long: MLNPLNFITKFIKSSNQKELDRINKIVVKVNSLEASVKNLSDEDFPKKTTELKDKLKNGENLDTLLPEAFALVREASKRTRNERHHDVQILGGVVLHEGKIAEMRTGEGKTLTISLAAYLNALTEEGVHIVTVNDYLAKRDSQEMGEIYKFLGLTFGFINNDQDDLERKKNYNFDITYATNSELGFDYLRDNMKFSKEQMVQRGHVYTIVDEIDSCLIDEARTPLVISGAAEDKTEQYLAIDKLIKRLLPEHYEIDEKDRNILLTNEGINNVEKIFSDAGILKNNNFYDPENLSLVHHVNQSLRAHHLFEKGKDYIVKDGTLKIIDELTGRILEGRRFGDGLHQALEAKERIDVQAENQTLASITYQNYFKLYNKISGCTGTAATESQEFYEIYNLVVVIIPTNKEMIRKDWNDQIFRTEEEKNKAIIEKVLECHKQGQPILVFTSSINKSEIYSKLLNDEKIKHVVLNAKNHENEAEIIANAGKMNSVIITTSISGRGVDIQLGGKKGSQPDDELLENKNKIKSLGGLFVIGTERMESRRVDNQARGRAGRQGDEGSSIFYVSLEDDLMRIFGSESMNNILQKLGLKDGESIDHPWINKALERAQQKVEARNFDIRKNLLKFDDVLNDQRHVIFSQRNGVMNSEKVFDYSDEFLSEIISHLISLKTQKLSTTKNNEFNNQLKTLLGKSVDDNEFKNVTELKDEEFKNKINSKFLEARNERIKMLDEEKAKEVEKRIFLQCIDLNWKSHIQYLEQLRQVIGLRSYGQRDPLVEYKKEAFFLFENLLNKLKMDFVTILINLKIVQEPSESISRPLKKETSNDPNCLLIKRKNEKISRNEKCEATGKKFKNCCGAL.

ATP-binding positions include Q89, 107 to 111 (GEGKT), and D501.

It belongs to the SecA family. As to quaternary structure, monomer and homodimer. Part of the essential Sec protein translocation apparatus which comprises SecA, SecYEG and auxiliary proteins SecDF-YajC and YidC.

Its subcellular location is the cell inner membrane. It localises to the cytoplasm. It carries out the reaction ATP + H2O + cellular proteinSide 1 = ADP + phosphate + cellular proteinSide 2.. Functionally, part of the Sec protein translocase complex. Interacts with the SecYEG preprotein conducting channel. Has a central role in coupling the hydrolysis of ATP to the transfer of proteins into and across the cell membrane, serving both as a receptor for the preprotein-SecB complex and as an ATP-driven molecular motor driving the stepwise translocation of polypeptide chains across the membrane. In Pelagibacter ubique (strain HTCC1062), this protein is Protein translocase subunit SecA.